The chain runs to 428 residues: Enolase (428 aa).

Position 163 (Gln163) interacts with (2R)-2-phosphoglycerate. Glu205 (proton donor) is an active-site residue. The Mg(2+) site is built by Asp242, Glu286, and Asp313. Residues Lys338, Arg367, Ser368, and Lys389 each contribute to the (2R)-2-phosphoglycerate site. Lys338 functions as the Proton acceptor in the catalytic mechanism.

It belongs to the enolase family. Mg(2+) serves as cofactor.

The protein resides in the cytoplasm. Its subcellular location is the secreted. It is found in the cell surface. It carries out the reaction (2R)-2-phosphoglycerate = phosphoenolpyruvate + H2O. The protein operates within carbohydrate degradation; glycolysis; pyruvate from D-glyceraldehyde 3-phosphate: step 4/5. In terms of biological role, catalyzes the reversible conversion of 2-phosphoglycerate (2-PG) into phosphoenolpyruvate (PEP). It is essential for the degradation of carbohydrates via glycolysis. This chain is Enolase, found in Verminephrobacter eiseniae (strain EF01-2).